A 117-amino-acid chain; its full sequence is Large ribosomal subunit protein bL20 (117 aa).

Belongs to the bacterial ribosomal protein bL20 family.

In terms of biological role, binds directly to 23S ribosomal RNA and is necessary for the in vitro assembly process of the 50S ribosomal subunit. It is not involved in the protein synthesizing functions of that subunit. The sequence is that of Large ribosomal subunit protein bL20 from Vibrio atlanticus (strain LGP32) (Vibrio splendidus (strain Mel32)).